The following is a 200-amino-acid chain: Casparian strip membrane protein 2 (200 aa).

Residues 1 to 37 (MMKSDSVAIDVPESSSVAKRKAPFMANIRDENGGYKK) lie on the Cytoplasmic side of the membrane. The chain crosses the membrane as a helical span at residues 38–58 (GLAIFDFILRLGAIAAALGAA). The Extracellular segment spans residues 59–88 (STMGTSDETLPFFTQFFQFNAGYDDFPTFQ). A helical membrane pass occupies residues 89-109 (FFVIAMAMVAGYLVLSLPFSI). Residues 110–121 (VSICRPHAAGPR) lie on the Cytoplasmic side of the membrane. The helical transmembrane segment at 122-142 (ILLFILDTVALTLNAAAGAAA) threads the bilayer. The Extracellular portion of the chain corresponds to 143 to 175 (ADIVYLAHNGNQTTNWLAICLQFGDFCREVSGS). The N-linked (GlcNAc...) asparagine glycan is linked to Asn153. Residues 176-196 (VVASFASVVILMVLVVMSGLA) traverse the membrane as a helical segment. Residues 197–200 (LRRY) are Cytoplasmic-facing.

The protein belongs to the Casparian strip membrane proteins (CASP) family. In terms of assembly, homodimer and heterodimers.

It is found in the cell membrane. In terms of biological role, regulates membrane-cell wall junctions and localized cell wall deposition. Required for establishment of the Casparian strip membrane domain (CSD) and the subsequent formation of Casparian strips, a cell wall modification of the root endodermis that determines an apoplastic barrier between the intraorganismal apoplasm and the extraorganismal apoplasm and prevents lateral diffusion. The chain is Casparian strip membrane protein 2 from Ricinus communis (Castor bean).